The chain runs to 508 residues: Photosystem II CP47 reaction center protein (508 aa).

A run of 6 helical transmembrane segments spans residues 21 to 36, 101 to 115, 140 to 156, 203 to 218, 237 to 252, and 457 to 472; these read AVHI…WAGS, IVFS…IWHW, GIHL…FGAF, IAAG…FHLS, VLSS…AFVV, and TFAL…HGAR.

It belongs to the PsbB/PsbC family. PsbB subfamily. PSII is composed of 1 copy each of membrane proteins PsbA, PsbB, PsbC, PsbD, PsbE, PsbF, PsbH, PsbI, PsbJ, PsbK, PsbL, PsbM, PsbT, PsbX, PsbY, PsbZ, Psb30/Ycf12, at least 3 peripheral proteins of the oxygen-evolving complex and a large number of cofactors. It forms dimeric complexes. Binds multiple chlorophylls. PSII binds additional chlorophylls, carotenoids and specific lipids. serves as cofactor.

The protein resides in the plastid. It localises to the chloroplast thylakoid membrane. One of the components of the core complex of photosystem II (PSII). It binds chlorophyll and helps catalyze the primary light-induced photochemical processes of PSII. PSII is a light-driven water:plastoquinone oxidoreductase, using light energy to abstract electrons from H(2)O, generating O(2) and a proton gradient subsequently used for ATP formation. This Hordeum vulgare (Barley) protein is Photosystem II CP47 reaction center protein.